The primary structure comprises 464 residues: ATP synthase subunit beta (464 aa).

152–159 (GGAGVGKT) lines the ATP pocket.

The protein belongs to the ATPase alpha/beta chains family. As to quaternary structure, F-type ATPases have 2 components, CF(1) - the catalytic core - and CF(0) - the membrane proton channel. CF(1) has five subunits: alpha(3), beta(3), gamma(1), delta(1), epsilon(1). CF(0) has three main subunits: a(1), b(2) and c(9-12). The alpha and beta chains form an alternating ring which encloses part of the gamma chain. CF(1) is attached to CF(0) by a central stalk formed by the gamma and epsilon chains, while a peripheral stalk is formed by the delta and b chains.

The protein localises to the cell membrane. The catalysed reaction is ATP + H2O + 4 H(+)(in) = ADP + phosphate + 5 H(+)(out). Produces ATP from ADP in the presence of a proton gradient across the membrane. The catalytic sites are hosted primarily by the beta subunits. The sequence is that of ATP synthase subunit beta from Clostridioides difficile (strain 630) (Peptoclostridium difficile).